We begin with the raw amino-acid sequence, 639 residues long: ATP-dependent rRNA helicase spb4 (639 aa).

The Q motif motif lies at 14-42 (WDAVTPPLSEWVLEAMSSMGFARMTPVQA). A Helicase ATP-binding domain is found at 45 to 249 (IPLFMAHKDV…RVGLRNPVKI (205 aa)). An ATP-binding site is contributed by 58-65 (AVTGSGKT). Positions 197-200 (DEAD) match the DEAD box motif. Positions 283 to 437 (ALKNILSSVQ…SISFSDADAT (155 aa)) constitute a Helicase C-terminal domain. Disordered stretches follow at residues 531–601 (RKEL…ETKE) and 620–639 (AAKAETAKAGGEDEEFKGFD). Residues 561–624 (QNAENKNKKL…RFRQAAAKAE (64 aa)) adopt a coiled-coil conformation. Over residues 577–601 (KLKQEKTKWENMTEEERQKARETKE) the composition is skewed to basic and acidic residues.

Belongs to the DEAD box helicase family. DDX55/SPB4 subfamily. In terms of assembly, component of pre-60S ribosomal complexes.

It is found in the nucleus. The protein localises to the nucleolus. It catalyses the reaction ATP + H2O = ADP + phosphate + H(+). Its function is as follows. ATP-binding RNA helicase involved in the biogenesis of 60S ribosomal subunits. Binds 90S pre-ribosomal particles and dissociates from pre-60S ribosomal particles after processing of 27SB pre-rRNA. Required for the normal formation of 18S rRNA through the processing of pre-rRNAs at sites A0, A1 and A2, and the normal formation of 25S and 5.8S rRNAs through the processing of pre-rRNAs at sites C1 and C2. This chain is ATP-dependent rRNA helicase spb4, found in Aspergillus clavatus (strain ATCC 1007 / CBS 513.65 / DSM 816 / NCTC 3887 / NRRL 1 / QM 1276 / 107).